The following is a 194-amino-acid chain: Large ribosomal subunit protein eL15 (194 aa).

Positions 161 to 194 are disordered; that stretch reads GLTSAGKKGRGLMYKGKGAEKARPSVRANGKKTK.

Belongs to the eukaryotic ribosomal protein eL15 family.

This chain is Large ribosomal subunit protein eL15, found in Methanococcus maripaludis (strain C5 / ATCC BAA-1333).